The following is a 76-amino-acid chain: Large ribosomal subunit protein uL24 (76 aa).

It belongs to the universal ribosomal protein uL24 family. In terms of assembly, part of the 50S ribosomal subunit.

In terms of biological role, one of two assembly initiator proteins, it binds directly to the 5'-end of the 23S rRNA, where it nucleates assembly of the 50S subunit. Functionally, one of the proteins that surrounds the polypeptide exit tunnel on the outside of the subunit. This is Large ribosomal subunit protein uL24 from Sulfurimonas denitrificans (strain ATCC 33889 / DSM 1251) (Thiomicrospira denitrificans (strain ATCC 33889 / DSM 1251)).